We begin with the raw amino-acid sequence, 297 residues long: HTH-type transcriptional regulator ArgP (297 aa).

One can recognise an HTH lysR-type domain in the interval 4-60 (PDYRTLQALDAVIRERGFERAAQKLCITQSAVSQRIKQLENMFGQPLLVRTVPPRPT). The H-T-H motif DNA-binding region spans 21–40 (FERAAQKLCITQSAVSQRIK).

It belongs to the LysR transcriptional regulatory family. In terms of assembly, homodimer.

Controls the transcription of genes involved in arginine and lysine metabolism. This chain is HTH-type transcriptional regulator ArgP, found in Escherichia coli O127:H6 (strain E2348/69 / EPEC).